We begin with the raw amino-acid sequence, 373 residues long: Lipoyl synthase (373 aa).

A disordered region spans residues 12–36 (HVVSNDHPSSSPLQPGVKQSGEDKI). Residues Cys81, Cys86, Cys92, Cys107, Cys111, Cys114, and Ser323 each coordinate [4Fe-4S] cluster. The 220-residue stretch at 93–312 (FSHGTATFMI…EEYGMALGFS (220 aa)) folds into the Radical SAM core domain. Residues 346–373 (PAVSSTEHRERHTIASKSASKTESIPHR) are disordered. The segment covering 360 to 373 (ASKSASKTESIPHR) has biased composition (polar residues).

The protein belongs to the radical SAM superfamily. Lipoyl synthase family. [4Fe-4S] cluster is required as a cofactor.

The protein localises to the cytoplasm. It carries out the reaction [[Fe-S] cluster scaffold protein carrying a second [4Fe-4S](2+) cluster] + N(6)-octanoyl-L-lysyl-[protein] + 2 oxidized [2Fe-2S]-[ferredoxin] + 2 S-adenosyl-L-methionine + 4 H(+) = [[Fe-S] cluster scaffold protein] + N(6)-[(R)-dihydrolipoyl]-L-lysyl-[protein] + 4 Fe(3+) + 2 hydrogen sulfide + 2 5'-deoxyadenosine + 2 L-methionine + 2 reduced [2Fe-2S]-[ferredoxin]. It participates in protein modification; protein lipoylation via endogenous pathway; protein N(6)-(lipoyl)lysine from octanoyl-[acyl-carrier-protein]: step 2/2. Its function is as follows. Catalyzes the radical-mediated insertion of two sulfur atoms into the C-6 and C-8 positions of the octanoyl moiety bound to the lipoyl domains of lipoate-dependent enzymes, thereby converting the octanoylated domains into lipoylated derivatives. The chain is Lipoyl synthase from Xylella fastidiosa (strain M12).